We begin with the raw amino-acid sequence, 209 residues long: Protein Bel-1 (209 aa).

Disordered regions lie at residues 1–30 (MASK…LDLT), 123–143 (FLNS…PATS), and 156–185 (CSRP…GESG). Polar residues-rich tracts occupy residues 21–30 (SHSTSGLDLT) and 132–143 (TPKTDPTRPATS).

Functionally, transcriptional transactivator that activates the viral internal promoter (IP), thereby enhancing its own expression. This transactivation is repressed by nuclear factor I. Also transactivates the long terminal repeat (LTR) promoter, thereby inducing structural gene expression, initiating the late phase of infection. It is therefore a key regulator of viral gene expression. It directly binds to and activates DNA target sites of viral promoters and those of distinct cellular genes. Required for viral replication. This chain is Protein Bel-1 (bel1), found in Felis catus (Cat).